Reading from the N-terminus, the 217-residue chain is MLQFTLSYIKSLTKNLSIISPLPPPKPIKQNHQTKPAMNNFQPPPPSEMPDYNGLLGTDDIGGFRYGIGVSIGVLLLITTITLTSYYCTRNQLSSSPSQTNQDSTRIHHHHHHVIIDVVPGLDEDTIQSYPKILYSEAKGPTTASCCAICLGDYKGKHLLRQLPDCNHLFHLKCIDTWLRLNPTCPVCRTSPLPTPLSTPLAEVVPLASSVAATRMS.

The chain crosses the membrane as a helical span at residues 61–81 (IGGFRYGIGVSIGVLLLITTI). An RING-type; atypical zinc finger spans residues 147 to 189 (CAICLGDYKGKHLLRQLPDCNHLFHLKCIDTWLRLNPTCPVCR).

Belongs to the RING-type zinc finger family. ATL subfamily.

It localises to the membrane. The enzyme catalyses S-ubiquitinyl-[E2 ubiquitin-conjugating enzyme]-L-cysteine + [acceptor protein]-L-lysine = [E2 ubiquitin-conjugating enzyme]-L-cysteine + N(6)-ubiquitinyl-[acceptor protein]-L-lysine.. Its pathway is protein modification; protein ubiquitination. The chain is RING-H2 finger protein ATL70 (ATL70) from Arabidopsis thaliana (Mouse-ear cress).